We begin with the raw amino-acid sequence, 168 residues long: G/U mismatch-specific DNA glycosylase (168 aa).

It belongs to the uracil-DNA glycosylase (UDG) superfamily. TDG/mug family. In terms of assembly, binds DNA as a monomer.

It localises to the cytoplasm. It catalyses the reaction Specifically hydrolyzes mismatched double-stranded DNA and polynucleotides, releasing free uracil.. Functionally, excises ethenocytosine and uracil, which can arise by alkylation or deamination of cytosine, respectively, from the corresponding mispairs with guanine in ds-DNA. It is capable of hydrolyzing the carbon-nitrogen bond between the sugar-phosphate backbone of the DNA and the mispaired base. The complementary strand guanine functions in substrate recognition. Required for DNA damage lesion repair in stationary-phase cells. This Escherichia coli (strain SMS-3-5 / SECEC) protein is G/U mismatch-specific DNA glycosylase.